Consider the following 649-residue polypeptide: Lysophospholipase (649 aa).

The N-terminal stretch at 1–21 (MNLKEWLLFSDAVFFAQGTLA) is a signal peptide. 17 N-linked (GlcNAc...) asparagine glycosylation sites follow: N32, N51, N77, N90, N121, N158, N168, N213, N275, N343, N386, N457, N487, N511, N539, N563, and N580. The PLA2c domain maps to 34–584 (SCDEDINLIR…TNYCWNGTID (551 aa)).

It belongs to the lysophospholipase family.

The protein resides in the secreted. It catalyses the reaction a 1-acyl-sn-glycero-3-phosphocholine + H2O = sn-glycerol 3-phosphocholine + a fatty acid + H(+). In terms of biological role, catalyzes the release of fatty acids from lysophospholipids. This is Lysophospholipase from Torulaspora delbrueckii (Yeast).